We begin with the raw amino-acid sequence, 335 residues long: Ferrochelatase (335 aa).

Fe cation is bound by residues histidine 207 and glutamate 288.

It belongs to the ferrochelatase family.

The protein resides in the cytoplasm. It carries out the reaction heme b + 2 H(+) = protoporphyrin IX + Fe(2+). Its pathway is porphyrin-containing compound metabolism; protoheme biosynthesis; protoheme from protoporphyrin-IX: step 1/1. Catalyzes the ferrous insertion into protoporphyrin IX. This is Ferrochelatase from Helicobacter pylori (strain HPAG1).